The following is a 459-amino-acid chain: Pup--protein ligase (459 aa).

Position 9 (E9) interacts with Mg(2+). Residue R54 coordinates ATP. A Mg(2+)-binding site is contributed by Y56. Residue D58 is the Proton acceptor of the active site. Residue E64 participates in Mg(2+) binding. Positions 67 and 421 each coordinate ATP.

Belongs to the Pup ligase/Pup deamidase family. Pup-conjugating enzyme subfamily.

It carries out the reaction ATP + [prokaryotic ubiquitin-like protein]-L-glutamate + [protein]-L-lysine = ADP + phosphate + N(6)-([prokaryotic ubiquitin-like protein]-gamma-L-glutamyl)-[protein]-L-lysine.. The protein operates within protein degradation; proteasomal Pup-dependent pathway. It participates in protein modification; protein pupylation. In terms of biological role, catalyzes the covalent attachment of the prokaryotic ubiquitin-like protein modifier Pup to the proteasomal substrate proteins, thereby targeting them for proteasomal degradation. This tagging system is termed pupylation. The ligation reaction involves the side-chain carboxylate of the C-terminal glutamate of Pup and the side-chain amino group of a substrate lysine. In Jonesia denitrificans (strain ATCC 14870 / DSM 20603 / BCRC 15368 / CIP 55.134 / JCM 11481 / NBRC 15587 / NCTC 10816 / Prevot 55134) (Listeria denitrificans), this protein is Pup--protein ligase.